A 161-amino-acid polypeptide reads, in one-letter code: Endoribonuclease YbeY (161 aa).

His-121, His-125, and His-131 together coordinate Zn(2+).

This sequence belongs to the endoribonuclease YbeY family. The cofactor is Zn(2+).

The protein localises to the cytoplasm. Its function is as follows. Single strand-specific metallo-endoribonuclease involved in late-stage 70S ribosome quality control and in maturation of the 3' terminus of the 16S rRNA. The sequence is that of Endoribonuclease YbeY from Bordetella avium (strain 197N).